We begin with the raw amino-acid sequence, 160 residues long: Cyanate hydratase (160 aa).

Catalysis depends on residues Arg-100, Glu-103, and Ser-126.

Belongs to the cyanase family.

The catalysed reaction is cyanate + hydrogencarbonate + 3 H(+) = NH4(+) + 2 CO2. Its function is as follows. Catalyzes the reaction of cyanate with bicarbonate to produce ammonia and carbon dioxide. In Aspergillus niger (strain ATCC MYA-4892 / CBS 513.88 / FGSC A1513), this protein is Cyanate hydratase.